The primary structure comprises 124 residues: MARILGIDIPNNKRVEISLTYIYGIGKPRAQEILRKAKIDFNKRVKDLSDEELALIRSVASTYVLEGDLRRDVALNIKRLMEVGSYAGLRHRRGLPVRGQRTKSNARTRKGPRKTVANKKIESK.

Over residues 92 to 117 (RRGLPVRGQRTKSNARTRKGPRKTVA) the composition is skewed to basic residues. A disordered region spans residues 92-124 (RRGLPVRGQRTKSNARTRKGPRKTVANKKIESK).

The protein belongs to the universal ribosomal protein uS13 family. As to quaternary structure, part of the 30S ribosomal subunit. Forms a loose heterodimer with protein S19. Forms two bridges to the 50S subunit in the 70S ribosome.

In terms of biological role, located at the top of the head of the 30S subunit, it contacts several helices of the 16S rRNA. In the 70S ribosome it contacts the 23S rRNA (bridge B1a) and protein L5 of the 50S subunit (bridge B1b), connecting the 2 subunits; these bridges are implicated in subunit movement. Contacts the tRNAs in the A and P-sites. The polypeptide is Small ribosomal subunit protein uS13 (Mycoplasmoides gallisepticum (strain R(low / passage 15 / clone 2)) (Mycoplasma gallisepticum)).